Consider the following 252-residue polypeptide: Imidazole glycerol phosphate synthase subunit HisF (252 aa).

Catalysis depends on residues D11 and D130.

It belongs to the HisA/HisF family. Heterodimer of HisH and HisF.

It localises to the cytoplasm. It carries out the reaction 5-[(5-phospho-1-deoxy-D-ribulos-1-ylimino)methylamino]-1-(5-phospho-beta-D-ribosyl)imidazole-4-carboxamide + L-glutamine = D-erythro-1-(imidazol-4-yl)glycerol 3-phosphate + 5-amino-1-(5-phospho-beta-D-ribosyl)imidazole-4-carboxamide + L-glutamate + H(+). Its pathway is amino-acid biosynthesis; L-histidine biosynthesis; L-histidine from 5-phospho-alpha-D-ribose 1-diphosphate: step 5/9. Functionally, IGPS catalyzes the conversion of PRFAR and glutamine to IGP, AICAR and glutamate. The HisF subunit catalyzes the cyclization activity that produces IGP and AICAR from PRFAR using the ammonia provided by the HisH subunit. This is Imidazole glycerol phosphate synthase subunit HisF from Staphylococcus aureus (strain Mu3 / ATCC 700698).